Consider the following 49-residue polypeptide: Large ribosomal subunit protein bL33 (49 aa).

This sequence belongs to the bacterial ribosomal protein bL33 family.

In Thermosipho melanesiensis (strain DSM 12029 / CIP 104789 / BI429), this protein is Large ribosomal subunit protein bL33.